Here is a 330-residue protein sequence, read N- to C-terminus: DNA-binding death effector domain-containing protein 2 (330 aa).

The region spanning 25 to 104 is the DED domain; it reads SLHRMFEVVG…RHDLLPHLAR (80 aa). The Nuclear localization signal signature appears at 104-109; the sequence is RKRRRP. The disordered stretch occupies residues 104–195; it reads RKRRRPVSPE…HQELGRPSSE (92 aa). Positions 137–147 are enriched in low complexity; it reads ASSSSDSPQSQ. A Bipartite nuclear localization signal motif is present at residues 156-174; it reads KRQRRSRGRPSSGARQRRR.

As to quaternary structure, interacts with CASP8, CASP10 and GTF3C3. Homodimerizes and heterodimerizes with DEDD. As to expression, expression is high in liver, heart, kidney, and testis but low in brain, spleen, lung, and skeleton muscle.

It is found in the nucleus. Its subcellular location is the nucleolus. May play a critical role in death receptor-induced apoptosis and may target CASP8 and CASP10 to the nucleus. May regulate degradation of intermediate filaments during apoptosis. May play a role in the general transcription machinery in the nucleus and might be an important regulator of the activity of GTF3C3. In Mus musculus (Mouse), this protein is DNA-binding death effector domain-containing protein 2 (Dedd2).